Here is a 987-residue protein sequence, read N- to C-terminus: VPS35 endosomal protein sorting factor-like (987 aa).

The span at 1–23 (MAERQSASSPTPSSPPQQQQQTP) shows a compositional bias: low complexity. Residues 1 to 115 (MAERQSASSP…DPLNNPLEKK (115 aa)) are disordered. A compositionally biased stretch (basic and acidic residues) spans 43–63 (NGREVERHPLNSITKTEDTGK). Residues 66–111 (QSSLSSNASSLQSAAAAASSSTATTDIDPLNNNNNNNTDIDPLNNP) are compositionally biased toward low complexity.

This sequence belongs to the VPS35L family. In terms of assembly, component of the heterotrimeric retriever complex.

Its subcellular location is the endosome. Acts as a component of the retriever complex. The retriever complex is a heterotrimeric complex related to retromer cargo-selective complex (CSC) and essential for retromer-independent retrieval and recycling of numerous cargos. In Dictyostelium discoideum (Social amoeba), this protein is VPS35 endosomal protein sorting factor-like.